The chain runs to 578 residues: A-type ATP synthase subunit A (578 aa).

228-235 serves as a coordination point for ATP; sequence GPFGSGKT.

Belongs to the ATPase alpha/beta chains family. As to quaternary structure, has multiple subunits with at least A(3), B(3), C, D, E, F, G, I and proteolipid K(x).

The protein resides in the cell membrane. The catalysed reaction is ATP + H2O + 4 H(+)(in) = ADP + phosphate + 5 H(+)(out). Its activity is regulated as follows. ATP hydrolysis stimulated by sulfite, ethanol, glycerol, magnesium and zinc ions, inhibited by diethylstilbestrol (DES) and less well by N,N-dicyclohexylcarbodiimide (DCCD). Its function is as follows. Component of the A-type ATP synthase that produces ATP from ADP in the presence of a proton gradient across the membrane. The A chain is the catalytic subunit. The sequence is that of A-type ATP synthase subunit A from Methanosarcina mazei (strain ATCC BAA-159 / DSM 3647 / Goe1 / Go1 / JCM 11833 / OCM 88) (Methanosarcina frisia).